We begin with the raw amino-acid sequence, 751 residues long: MALGEEKAEAEASEDTKAQSYGRGSCGERELDTPGPMSGEQPPRLEAEGGLTSPVWGAEGIPAPTCWIGTDPGGPSRAHQPQASDASREPVAERSEPALSGLPPATMGSGDLLLSRESQVEKTKLSASEELPQTPSLPRTTTICSGHDADTEDDPSLADLPQAPSSGLSCLSQWKSMPSPGSAAPQPSSCSVSASSTGSSLQGHQERTEPRGGSLAKVSSSLELVVPQEPSSVVGLGPRPQWSPQPVFSGGDASGLGRRRLSFQAEYWACVLPDSLPPSPDRHSPLWNPNKEYEDLLDYTYPLRPGPQLPKHLDSRVPADPVLQDSGVDLDSFSVSPASTLKSPTNVFPNCPPAEATALPLSGPREPSLKQWPSGVPQKQGGMGLASWSQLTSTPRAPGSRDARWECREPALRGAKDWLPIGKPLDMGSPQLRTRDRGWPSPRPEREKRTSQSARRPTCTESRWKSEEEVESDDEYLALPARLTQVSSLVSYIGSISTLVTLPAGDIKGQSPLEVSDTDGPASLPSSSSQSQLPPGAALRGSGDPEGQNPCFLRSFVRAQDSAGEGSLGSSQALGVSSGLLKTRPSLPARLDRWPFSDPDAEGQLPRKGGEQGKESLVQCVKTFCCQLEELICWLYNVADVTDHGTAARSNLTSLKSSLQLYRQFKKDIDEHQSLTESVLQKGEILLQCLLENTPVLEDVLGRIAKQSGELESHADRLYDSILASLDMLAGCTLIPDKKPMAAMERPREGV.

Basic and acidic residues-rich tracts occupy residues 1-17 and 86-96; these read MALGEEKAEAEASEDTK and ASREPVAERSE. The disordered stretch occupies residues 1–253; that stretch reads MALGEEKAEA…PQPVFSGGDA (253 aa). Polar residues-rich tracts occupy residues 131–144 and 163–175; these read LPQTPSLPRTTTIC and APSSGLSCLSQWK. Over residues 176–200 the composition is skewed to low complexity; that stretch reads SMPSPGSAAPQPSSCSVSASSTGSS. Ser-326 carries the phosphoserine modification. Positions 339–348 are enriched in polar residues; it reads STLKSPTNVF. Disordered stretches follow at residues 339 to 474, 511 to 545, and 590 to 611; these read STLK…ESDD, SPLEVSDTDGPASLPSSSSQSQLPPGAALRGSGDP, and RLDRWPFSDPDAEGQLPRKGGE. Basic and acidic residues-rich tracts occupy residues 399-416 and 433-450; these read GSRDARWECREPALRGAK and RTRDRGWPSPRPEREKRT. The span at 451-461 shows a compositional bias: polar residues; sequence SQSARRPTCTE. Phosphoserine occurs at positions 466 and 472. Residues 520-537 are compositionally biased toward low complexity; the sequence is GPASLPSSSSQSQLPPGA.

Interacts with CNTLN; the interaction recruits CEP68 to the centrosome. Interacts with the SCF(FBXW11) complex which contains SKP1, CUL1 and FBXW11; the interaction is probably mediated by FBXW11 and the complex also contains CDK5RAP2 and PCNT. Also interacts with F-box protein BTRC. Interacts with serine/threonine-protein kinase PLK1; the interaction leads to phosphorylation of CEP68 and its subsequent degradation. Interacts with NEK2; the interaction leads to phosphorylation of CEP68. Phosphorylation by PLK1 is required for binding to BTRC in prometaphase. Phosphorylated directly or indirectly by NEK2. NEK2-mediated phosphorylation promotes CEP68 dissociation from the centrosome and its degradation at the onset of mitosis. In terms of processing, ubiquitinated and targeted for proteasomal degradation in early mitosis by the SCF(BTRC) and/or SCF(FBXW11) E3 ubiquitin-protein ligase complexes. Degradation is complete by prometaphase and is required for removal of CDK5RAP2 from the peripheral pericentriolar material and subsequent centriole separation.

The protein resides in the cytoplasm. It is found in the cytoskeleton. The protein localises to the microtubule organizing center. It localises to the centrosome. Functionally, involved in maintenance of centrosome cohesion, probably as part of a linker structure which prevents centrosome splitting. Required for localization of CDK5RAP2 to the centrosome during interphase. Contributes to CROCC/rootletin filament formation. This is Centrosomal protein of 68 kDa (CEP68) from Pongo abelii (Sumatran orangutan).